Consider the following 399-residue polypeptide: Acetate kinase (399 aa).

N8 is a Mg(2+) binding site. K15 contacts ATP. Substrate is bound at residue R89. D146 acts as the Proton donor/acceptor in catalysis. Residues H206 to G210, D283 to R285, and G331 to N335 each bind ATP. A Mg(2+)-binding site is contributed by E383.

This sequence belongs to the acetokinase family. Homodimer. It depends on Mg(2+) as a cofactor. The cofactor is Mn(2+).

Its subcellular location is the cytoplasm. It carries out the reaction acetate + ATP = acetyl phosphate + ADP. It participates in metabolic intermediate biosynthesis; acetyl-CoA biosynthesis; acetyl-CoA from acetate: step 1/2. In terms of biological role, catalyzes the formation of acetyl phosphate from acetate and ATP. Can also catalyze the reverse reaction. This Streptococcus equi subsp. equi (strain 4047) protein is Acetate kinase.